Consider the following 194-residue polypeptide: UPF0232 protein MSMEG_0004/MSMEI_0006 (194 aa).

Residues 1-14 (MTGPFDDDGPEEDA) show a composition bias toward acidic residues. A disordered region spans residues 1 to 81 (MTGPFDDDGP…GPGPDARDPQ (81 aa)). The segment covering 30 to 52 (DLVRRTLEEARGAARSQGKDVGR) has biased composition (basic and acidic residues).

This sequence belongs to the UPF0232 family.

In Mycolicibacterium smegmatis (strain ATCC 700084 / mc(2)155) (Mycobacterium smegmatis), this protein is UPF0232 protein MSMEG_0004/MSMEI_0006.